A 119-amino-acid polypeptide reads, in one-letter code: Beta-2-microglobulin (119 aa).

A signal peptide spans Met1–Ala20. The region spanning Pro25–Lys114 is the Ig-like C1-type domain. Cys45 and Cys100 are joined by a disulfide.

Belongs to the beta-2-microglobulin family. Heterodimer of an alpha chain and a beta chain. Beta-2-microglobulin is the beta-chain of major histocompatibility complex class I molecules.

It localises to the secreted. Its function is as follows. Component of the class I major histocompatibility complex (MHC). Involved in the presentation of peptide antigens to the immune system. The protein is Beta-2-microglobulin (B2M) of Saguinus bicolor bicolor (Pied bare-faced tamarin).